A 64-amino-acid chain; its full sequence is Large ribosomal subunit protein eL37 (64 aa).

4 residues coordinate Zn(2+): C20, C23, C35, and C38. A C4-type zinc finger spans residues 20 to 38 (CRRCGRRAFHVRKKVCAAC).

It belongs to the eukaryotic ribosomal protein eL37 family. It depends on Zn(2+) as a cofactor.

Binds to the 23S rRNA. This chain is Large ribosomal subunit protein eL37, found in Methanococcus maripaludis (strain DSM 14266 / JCM 13030 / NBRC 101832 / S2 / LL).